The chain runs to 609 residues: MSTGFNAQSFLRMVSSSAGVYRMYDVKGDVIYVGKAKDLKKRLSSYFRKNLGNVKTQALVSHIHHIDVTLTHSETDALLLENDYIKQYMPKYNVLLRDDKSYPYIFLSQHEHPRLAYHRGPQREKGYYFGPYPNGGAVRESLHLMQKLFPIRQCDDLYYKSRTRPCLQYQLSRCSAPCVGKVSNAEYDEQVKLASLFLKGKDKQVISELVAKMEEAAGQQAYEQAARFRDQIMALRRVAEQQEVSGNTGDMDVIGVHYASGIACFHLLFIREGKIFGSRSYYPTVPAQTDIEEVLRSFLLQFYLNADIQRTIPKEVVISHHFEELHELEAAVSEALNKKFSIKTNVRADRASFLRLALTNATNAVMTRLSHKNTVEQRFVLLEEILELNAPIQRMECFDISHTMGESTVASCVVFNREGPHKAEYRRYNIEGITPGDDYAAMKQAISRRFDKIDASGKIPDILFIDGGLGQLRIAQQIVDEKFVNLDKAPQLIGVAKGESRKPGLETLIFGDTETSFSLEDDSPALHLIQHIRDESHRFAITGHRNRRQKTRNTSTLESIPGIGPKRRKALLQHLGGLQEVKGASVAELAKVPGISIEMAQTIHDALRG.

The 79-residue stretch at 16-94 folds into the GIY-YIG domain; that stretch reads SSAGVYRMYD…IKQYMPKYNV (79 aa). A UVR domain is found at 203-238; it reads KQVISELVAKMEEAAGQQAYEQAARFRDQIMALRRV.

It belongs to the UvrC family. As to quaternary structure, interacts with UvrB in an incision complex.

Its subcellular location is the cytoplasm. Its function is as follows. The UvrABC repair system catalyzes the recognition and processing of DNA lesions. UvrC both incises the 5' and 3' sides of the lesion. The N-terminal half is responsible for the 3' incision and the C-terminal half is responsible for the 5' incision. The protein is UvrABC system protein C of Shewanella sp. (strain ANA-3).